Reading from the N-terminus, the 436-residue chain is MISISFLNCFFLVFLFLFFSDVHGSYNGLGLKPQMGWNSWNKYACDIDESIILNNAKAIKEEGLLDLGYEYIVMDDCWSKHERNATTGRLEANPDKFPNGIGSMAKKLHDMGFKFGMYSSAGKYTCAGFPGSLNHEQIDADTFADWGVDYLKYDNCFNEGKSGVPLISYERYKRMSDALNKTGRPIFYSLCQWGEDFVWNWGNTIANSWRISGDIFDTFSRKDVRCPCETIECFALQGDHCSVMNIISKASFLSSKAGMNSGWNDLDSLEVGNGGMSFEEYKTHFTMWAILKSPLILGNDVSSMSPMDKLIVSNKELISINQDIGTNPAALIWKKKYGDEYIELFSGRLSNNDWVVAVLNAASEPLKMGIHLSDIFVDALGNAEHDWLATDLWNNNVKLVSDRIRANVASHGVQVWRFQQYKVKNTNDKFFSFNKH.

Positions 1-24 are cleaved as a signal peptide; that stretch reads MISISFLNCFFLVFLFLFFSDVHG. Cysteines 45 and 77 form a disulfide. The N-linked (GlcNAc...) asparagine glycan is linked to asparagine 84. Cysteines 126 and 156 form a disulfide. The active-site Nucleophile is the aspartate 154. A glycan (N-linked (GlcNAc...) asparagine) is linked at asparagine 180. Residue aspartate 214 is the Proton donor of the active site.

The protein belongs to the glycosyl hydrolase 27 family.

The protein localises to the endoplasmic reticulum lumen. The protein resides in the secreted. The catalysed reaction is Hydrolysis of terminal, non-reducing alpha-D-galactose residues in alpha-D-galactosides, including galactose oligosaccharides, galactomannans and galactolipids.. Secreted alpha-galactosidase required for catabolic conversion of melibiose to glucose and galactose. This chain is Alpha-galactosidase mel1 (mel1), found in Schizosaccharomyces pombe (strain 972 / ATCC 24843) (Fission yeast).